A 116-amino-acid chain; its full sequence is Appetite-regulating hormone (116 aa).

The signal sequence occupies residues 1–23 (MPAPRTICSLLLLSMLWMDLAMA). S26 carries O-decanoyl serine; alternate lipidation. A lipid anchor (O-hexanoyl serine; alternate) is attached at S26. S26 carries O-octanoyl serine; alternate lipidation. A disordered region spans residues 29–67 (SPEHQKLQRKEPKKPSGRLKPRALEGQFDPDVGSQEEGA). Residues 31 to 42 (EHQKLQRKEPKK) show a composition bias toward basic and acidic residues. Residues 51-74 (ALEGQFDPDVGSQEEGAEDELEIR) constitute a propeptide, removed in mature form. A Leucine amide modification is found at L97. Positions 98–116 (GKFLQDILWEEAEETLADE) are cleaved as a propeptide — removed in mature form.

This sequence belongs to the motilin family. Post-translationally, O-octanoylated by GOAT/MBOAT4. O-octanoylation is essential for ghrelin activity. In terms of processing, amidation of Leu-97 is essential for obestatin activity.

It localises to the secreted. Ghrelin is the ligand for growth hormone secretagogue receptor type 1 (GHSR). Induces the release of growth hormone from the pituitary. Has an appetite-stimulating effect, induces adiposity and stimulates gastric acid secretion. Involved in growth regulation. Functionally, obestatin may be the ligand for GPR39. May have an appetite-reducing effect resulting in decreased food intake. May reduce gastric emptying activity and jejunal motility. This Capra hircus (Goat) protein is Appetite-regulating hormone (GHRL).